The following is a 382-amino-acid chain: Farnesyl diphosphate synthase (382 aa).

Residues Lys81, Arg84, and Gln120 each coordinate isopentenyl diphosphate. Mg(2+) contacts are provided by Asp127 and Asp131. Dimethylallyl diphosphate is bound at residue Arg136. Arg137 is a binding site for isopentenyl diphosphate. Dimethylallyl diphosphate contacts are provided by Lys230, Thr231, Gln270, Lys287, and Lys296.

It belongs to the FPP/GGPP synthase family. It depends on Mg(2+) as a cofactor.

The protein localises to the cytoplasm. The enzyme catalyses isopentenyl diphosphate + dimethylallyl diphosphate = (2E)-geranyl diphosphate + diphosphate. It carries out the reaction isopentenyl diphosphate + (2E)-geranyl diphosphate = (2E,6E)-farnesyl diphosphate + diphosphate. It participates in isoprenoid biosynthesis; farnesyl diphosphate biosynthesis; farnesyl diphosphate from geranyl diphosphate and isopentenyl diphosphate: step 1/1. Its pathway is isoprenoid biosynthesis; geranyl diphosphate biosynthesis; geranyl diphosphate from dimethylallyl diphosphate and isopentenyl diphosphate: step 1/1. Inhibited by aminobisphosphonate drugs (aBP), such as risedronate and alendronate. Functionally, key enzyme in isoprenoid biosynthesis which catalyzes the formation of farnesyl diphosphate (FPP), a sterol precursor. Involved in the inhibition of cell growth. This Dictyostelium discoideum (Social amoeba) protein is Farnesyl diphosphate synthase (fps).